A 603-amino-acid polypeptide reads, in one-letter code: Elongation factor 4 (603 aa).

One can recognise a tr-type G domain in the interval 7-189 (SHIRNFSIIA…SIVHLVPPPR (183 aa)). Residues 19–24 (DHGKST) and 136–139 (NKID) contribute to the GTP site.

Belongs to the TRAFAC class translation factor GTPase superfamily. Classic translation factor GTPase family. LepA subfamily.

It is found in the cell inner membrane. The enzyme catalyses GTP + H2O = GDP + phosphate + H(+). Its function is as follows. Required for accurate and efficient protein synthesis under certain stress conditions. May act as a fidelity factor of the translation reaction, by catalyzing a one-codon backward translocation of tRNAs on improperly translocated ribosomes. Back-translocation proceeds from a post-translocation (POST) complex to a pre-translocation (PRE) complex, thus giving elongation factor G a second chance to translocate the tRNAs correctly. Binds to ribosomes in a GTP-dependent manner. In Thermosynechococcus vestitus (strain NIES-2133 / IAM M-273 / BP-1), this protein is Elongation factor 4.